Here is a 21-residue protein sequence, read N- to C-terminus: 20 kDa chaperonin, chloroplastic (21 aa).

This sequence belongs to the GroES chaperonin family. Forms stable complexes with CPN60 in the presence of ATP.

The protein localises to the plastid. It is found in the chloroplast. Seems to function only as a co-chaperone, along with cpn60, and in certain cases is essential for the discharge of biologically active proteins from cpn60. The protein is 20 kDa chaperonin, chloroplastic (CPN21) of Pisum sativum (Garden pea).